We begin with the raw amino-acid sequence, 200 residues long: ASI1-immunoprecipitated protein 1 (200 aa).

The RRM domain maps to 18 to 101 (RTVYVDELTP…RPVRACAAEP (84 aa)).

In terms of assembly, component of the ASI1-AIPP1-EDM2 (AAE) RNA regulatory complex composed of at least AIPP1/EDM3, ASI1 and EDM2 and may contain CPL2, AIPP2 and AIPP3/BDT1. Binds directly to ASI1 and EDM2 and may function as a bridge protein between them. Co-associates with EDM2 to histone H3 lysine 9 dimethylation (H3K9me2)-marked chromatin and transcripts at a critical proximal polyadenylation site of RPP7 to hamper proximal transcript polyadeylation/termination.

The protein resides in the nucleus. Its function is as follows. Prevents gene silencing by suppressing CHG methylation as well as histone H3 lysine 9 dimethylation (H3K9me2) status at target loci. Collaboratively with ASI1 and EDM2, the AAE complex regulates alternative RNA processing (e.g. alternative splicing) and epigenetic silencing (e.g. H3K9me2) of intronic heterochromatin-containing genes as well as genic heterochromatin-containing genes by promoting distal 3' polyadenylation, thus being required for the accumulation of their full-length transcripts. May also modulate transposable elements (TE) expression. Mediates RPP7-dependent race-specific disease resistance by promoting histone H3 lysine 9 dimethylation (H3K9me2) at the proximal RPP7 polyadenylation site, thus controlling alternative polyadenylation of RPP7 immune receptor transcripts and facilitating 2-phosphoserine RNAPII occupancy. In cv. Columbia, required for RPP7-dependent disease resistance against the Hyaloperonospora arabidopsidis isolate Hiks1. The polypeptide is ASI1-immunoprecipitated protein 1 (Arabidopsis thaliana (Mouse-ear cress)).